A 596-amino-acid chain; its full sequence is MQRSRRALLVRRRVSETTSNGRNRFYKVSLSLVFLIWGLVFLSTLWISHVDGDKGRSLVDSVEKGEPDDERADETAESVDATSLESTSVHSNPGLSSDVDIAAAGESKGSETILKQLEVDNTIVIVGNVTESKDNVPMKQSEINNNTVPGNDTETTGSKLDQLSRAVPLGLDEFKSRASNSRDKSLSGQVTGVIHRMEPGGKEYNYAAASKGAKVLSSNKEAKGASSIICRDKDKYLRNPCSTEGKFVVIELSEETLVNTIKIANFEHYSSNLKDFEILGTLVYPTDTWVHLGNFTALNMKHEQNFTFADPKWVRYLKLNLLSHYGSEFYCTLSLLEVYGVDAVERMLEDLISIQDKNILKLQEGDTEQKEKKTMQAKESFESDEDKSKQKEKEQEASPENAVVKDEVSLEKRKLPDPVEEIKHQPGSRMPGDTVLKILMQKIRSLDVSLSVLESYLEERSLKYGMIFKEMDLEASKREKEVETMRLEVEGMKEREENTKKEAMEMRKWRMRVETELEKAENEKEKVKERLEQVLERLEWMEKKGVVVFTICVGFGTIAVVAVVFGMGIVRAEKQGGLAWLLLLISSTFVMFILSL.

Residues 28–48 traverse the membrane as a helical segment; it reads VSLSLVFLIWGLVFLSTLWIS. Disordered stretches follow at residues 58 to 98 and 139 to 158; these read LVDS…LSSD and KQSEINNNTVPGNDTETTGS. The span at 66 to 77 shows a compositional bias: acidic residues; the sequence is EPDDERADETAE. 2 stretches are compositionally biased toward polar residues: residues 80–95 and 141–158; these read DATSLESTSVHSNPGL and SEINNNTVPGNDTETTGS. The 165-residue stretch at 179–343 folds into the SUN domain; it reads SNSRDKSLSG…SLLEVYGVDA (165 aa). Over residues 366-396 the composition is skewed to basic and acidic residues; it reads DTEQKEKKTMQAKESFESDEDKSKQKEKEQE. The disordered stretch occupies residues 366–410; the sequence is DTEQKEKKTMQAKESFESDEDKSKQKEKEQEASPENAVVKDEVSL. Residues 475-544 adopt a coiled-coil conformation; sequence ASKREKEVET…LERLEWMEKK (70 aa). Transmembrane regions (helical) follow at residues 545–565 and 576–596; these read GVVVFTICVGFGTIAVVAVVF and GGLAWLLLLISSTFVMFILSL.

In terms of assembly, forms homomers and heteromers with SUN3. Interacts with SUN1, SUN2 and TIK.

It localises to the nucleus membrane. It is found in the endoplasmic reticulum membrane. In terms of biological role, encodes a member of the mid-SUN subfamily of SUN-domain proteins that is localized to both the nuclear envelope and the ER. It is involved in early seed development and nuclear morphology. [TAIR]. The sequence is that of SUN domain-containing protein 4 from Arabidopsis thaliana (Mouse-ear cress).